The following is a 777-amino-acid chain: uncharacterized protein (777 aa).

Disordered regions lie at residues 1–101 (MNNN…NLSN), 128–150 (SYNNNNNNNNNNKNNNNNINDDN), 219–267 (HHIH…NNMN), 334–366 (SLPFSSLSDNNGDDDDDGIDDGIDDGIDDGIDD), 391–466 (ISNS…ATIS), 529–577 (KNLN…NNKG), 590–622 (LAQEPNDEQNKTKKELEEVKEEEEEEEEEISTI), and 713–751 (EKQGGDDPEDSSDSDSDSDSNSNSDSSDLGNITVRKWKP). Composition is skewed to low complexity over residues 128-147 (SYNNNNNNNNNNKNNNNNIN) and 243-265 (NNNNNNNNNNNNNNNNNINNHNN). Residues 334 to 343 (SLPFSSLSDN) are compositionally biased toward polar residues. Residues 344–366 (NGDDDDDGIDDGIDDGIDDGIDD) are compositionally biased toward acidic residues. Residues 391 to 407 (ISNSFHQNQSPCNNSFK) show a composition bias toward polar residues. 2 stretches are compositionally biased toward low complexity: residues 408–466 (NNNN…ATIS) and 532–574 (NNNN…NNKN). Residues 597–606 (EQNKTKKELE) are compositionally biased toward basic and acidic residues. Acidic residues-rich tracts occupy residues 607 to 620 (EVKEEEEEEEEEIS) and 718 to 730 (DDPEDSSDSDSDS). Residues 731 to 740 (DSNSNSDSSD) are compositionally biased toward low complexity.

This is an uncharacterized protein from Dictyostelium discoideum (Social amoeba).